The following is a 394-amino-acid chain: MDSQGRKVVVCDNGTGFVKCGYAGSNFPEHIFPALVGRPIIRSTAKVGNIEIKDLMVGDEASELRSMLEVNYPMENGIVRNWDDMKHLWDYTFGPEKLNINSRDCKILLTEPPMNPTKNREKIIEVMFETYQFTGVYIAIQAVLTLYAQGLLTGVVVDSGDGVTHICPVYEGFSLPHLTRRLDIAGRDITRYLIKLLLLRGYAFNHSADFETVRMMKENLCYVGYNIEQEQKLALETTVLVESYTLPDGRVIKVGGERFEAPEALFQPHLINVEGVGVAELLFNTIQAADIDTRAEFYKHIVLSGGSTMYPGLPSRLERELKQLYLERVLKGDVDKLSKFKIRIEDPPRRKHMVFLGGAVLADIMKDKDNFWLTREEYQEKGVRVLEKLGVTVR.

ATP-binding positions include 160 to 162 (GDG), 214 to 218 (RMMKE), and 305 to 310 (GGSTMY).

It belongs to the actin family. ARP2 subfamily. In terms of assembly, component of the Arp2/3 complex composed of actr2/arp2, actr3/arp3, arpc1b, arpc2, arpc3, arpc4 and arpc5.

It is found in the cytoplasm. Its subcellular location is the cytoskeleton. It localises to the cell projection. The protein resides in the nucleus. In terms of biological role, ATP-binding component of the Arp2/3 complex, a multiprotein complex that mediates actin polymerization upon stimulation by nucleation-promoting factor (NPF). The Arp2/3 complex mediates the formation of branched actin networks in the cytoplasm, providing the force for cell motility. Seems to contact the pointed end of the daughter actin filament. In addition to its role in the cytoplasmic cytoskeleton, the Arp2/3 complex also promotes actin polymerization in the nucleus, thereby regulating gene transcription and repair of damaged DNA. The Arp2/3 complex promotes homologous recombination (HR) repair in response to DNA damage by promoting nuclear actin polymerization, leading to drive motility of double-strand breaks (DSBs). The polypeptide is Actin-related protein 2-B (actr2b) (Danio rerio (Zebrafish)).